A 952-amino-acid chain; its full sequence is Translation initiation factor IF-2 (952 aa).

Disordered stretches follow at residues 74–95 (QRRL…RQLK), 153–204 (AAQA…KEEP), 230–256 (MHSP…EQAD), and 273–319 (DEKG…DVND). Over residues 153–168 (AAQADQTDQTDQTDQA) the composition is skewed to low complexity. Positions 232–242 (SPFDRSSEAER) are enriched in basic and acidic residues. Low complexity predominate over residues 286 to 303 (PGETNAATPAGTASTAGA). A tr-type G domain is found at 449-619 (IRPPVITIMG…LAEAEIRELK (171 aa)). Positions 458–465 (GHVDHGKT) are G1. GTP is bound at residue 458 to 465 (GHVDHGKT). The tract at residues 483–487 (GITQH) is G2. The tract at residues 505-508 (DTPG) is G3. GTP is bound by residues 505 to 509 (DTPGH) and 559 to 562 (NKVD). Positions 559-562 (NKVD) are G4. The segment at 595 to 597 (SAK) is G5.

It belongs to the TRAFAC class translation factor GTPase superfamily. Classic translation factor GTPase family. IF-2 subfamily.

The protein resides in the cytoplasm. One of the essential components for the initiation of protein synthesis. Protects formylmethionyl-tRNA from spontaneous hydrolysis and promotes its binding to the 30S ribosomal subunits. Also involved in the hydrolysis of GTP during the formation of the 70S ribosomal complex. This chain is Translation initiation factor IF-2, found in Chlorobium limicola (strain DSM 245 / NBRC 103803 / 6330).